Consider the following 164-residue polypeptide: Transcription factor E (164 aa).

Residues 5-87 (NDKVIRGYLL…LWRLDFSDIE (83 aa)) form the HTH TFE/IIEalpha-type domain.

The protein belongs to the TFE family. As to quaternary structure, monomer. Interaction with RNA polymerase subunits RpoF and RpoE is necessary for Tfe stimulatory transcription activity. Able to interact with Tbp and RNA polymerase in the absence of DNA promoter. Interacts both with the preinitiation and elongation complexes.

In terms of biological role, transcription factor that plays a role in the activation of archaeal genes transcribed by RNA polymerase. Facilitates transcription initiation by enhancing TATA-box recognition by TATA-box-binding protein (Tbp), and transcription factor B (Tfb) and RNA polymerase recruitment. Not absolutely required for transcription in vitro, but particularly important in cases where Tbp or Tfb function is not optimal. It dynamically alters the nucleic acid-binding properties of RNA polymerases by stabilizing the initiation complex and destabilizing elongation complexes. Seems to translocate with the RNA polymerase following initiation and acts by binding to the non template strand of the transcription bubble in elongation complexes. In Methanosarcina barkeri (strain Fusaro / DSM 804), this protein is Transcription factor E.